The following is a 356-amino-acid chain: UDP-N-acetylglucosamine--N-acetylmuramyl-(pentapeptide) pyrophosphoryl-undecaprenol N-acetylglucosamine transferase (356 aa).

Residues 12 to 14 (SGG), N120, R163, S187, and Q286 each bind UDP-N-acetyl-alpha-D-glucosamine.

It belongs to the glycosyltransferase 28 family. MurG subfamily.

It is found in the cell inner membrane. The enzyme catalyses di-trans,octa-cis-undecaprenyl diphospho-N-acetyl-alpha-D-muramoyl-L-alanyl-D-glutamyl-meso-2,6-diaminopimeloyl-D-alanyl-D-alanine + UDP-N-acetyl-alpha-D-glucosamine = di-trans,octa-cis-undecaprenyl diphospho-[N-acetyl-alpha-D-glucosaminyl-(1-&gt;4)]-N-acetyl-alpha-D-muramoyl-L-alanyl-D-glutamyl-meso-2,6-diaminopimeloyl-D-alanyl-D-alanine + UDP + H(+). It functions in the pathway cell wall biogenesis; peptidoglycan biosynthesis. In terms of biological role, cell wall formation. Catalyzes the transfer of a GlcNAc subunit on undecaprenyl-pyrophosphoryl-MurNAc-pentapeptide (lipid intermediate I) to form undecaprenyl-pyrophosphoryl-MurNAc-(pentapeptide)GlcNAc (lipid intermediate II). This chain is UDP-N-acetylglucosamine--N-acetylmuramyl-(pentapeptide) pyrophosphoryl-undecaprenol N-acetylglucosamine transferase, found in Pelagibacter ubique (strain HTCC1062).